The chain runs to 419 residues: Lipoyl synthase, mitochondrial (419 aa).

The transit peptide at 1-26 (MAVCAGRLKCFGNPAVSLRTAASRAY) directs the protein to the mitochondrion. Low complexity predominate over residues 28–47 (TTTSPDPAIPSSSSASSSSA). The tract at residues 28 to 61 (TTTSPDPAIPSSSSASSSSALPKRPQTSFRDKLN) is disordered. [4Fe-4S] cluster is bound by residues cysteine 136, cysteine 141, cysteine 147, cysteine 167, cysteine 171, cysteine 174, and serine 382. In terms of domain architecture, Radical SAM core spans 150 to 371 (GSSKSAATAT…KDRALEMGFL (222 aa)). The disordered stretch occupies residues 399–419 (AESTGPESTNVPNVTPDAIVR).

It belongs to the radical SAM superfamily. Lipoyl synthase family. [4Fe-4S] cluster serves as cofactor.

The protein localises to the mitochondrion. It catalyses the reaction [[Fe-S] cluster scaffold protein carrying a second [4Fe-4S](2+) cluster] + N(6)-octanoyl-L-lysyl-[protein] + 2 oxidized [2Fe-2S]-[ferredoxin] + 2 S-adenosyl-L-methionine + 4 H(+) = [[Fe-S] cluster scaffold protein] + N(6)-[(R)-dihydrolipoyl]-L-lysyl-[protein] + 4 Fe(3+) + 2 hydrogen sulfide + 2 5'-deoxyadenosine + 2 L-methionine + 2 reduced [2Fe-2S]-[ferredoxin]. It participates in protein modification; protein lipoylation via endogenous pathway; protein N(6)-(lipoyl)lysine from octanoyl-[acyl-carrier-protein]: step 2/2. Catalyzes the radical-mediated insertion of two sulfur atoms into the C-6 and C-8 positions of the octanoyl moiety bound to the lipoyl domains of lipoate-dependent enzymes, thereby converting the octanoylated domains into lipoylated derivatives. The chain is Lipoyl synthase, mitochondrial from Coccidioides posadasii (strain C735) (Valley fever fungus).